The sequence spans 639 residues: UvrABC system protein C (639 aa).

The region spanning 20 to 97 (ERSGVYRMFD…IKKFQPKFNI (78 aa)) is the GIY-YIG domain. Residues 207–242 (KELQENLSRKMEELSSQMRFEEAAEIRDRIKALSYV) form the UVR domain.

The protein belongs to the UvrC family. In terms of assembly, interacts with UvrB in an incision complex.

The protein resides in the cytoplasm. The UvrABC repair system catalyzes the recognition and processing of DNA lesions. UvrC both incises the 5' and 3' sides of the lesion. The N-terminal half is responsible for the 3' incision and the C-terminal half is responsible for the 5' incision. This is UvrABC system protein C from Rickettsia rickettsii (strain Iowa).